Here is a 276-residue protein sequence, read N- to C-terminus: Undecaprenyl-diphosphatase 2 (276 aa).

8 helical membrane-spanning segments follow: residues 1–21 (MSLW…LFPV), 44–64 (QLLP…LWYF), 87–107 (GHLM…GLLL), 114–134 (VFHD…LLWV), 150–170 (MTFK…IPGF), 190–210 (AAEF…VLEL), 220–240 (LMDA…SVRF), and 251–271 (LASF…WFML).

The protein belongs to the UppP family.

The protein resides in the cell inner membrane. It carries out the reaction di-trans,octa-cis-undecaprenyl diphosphate + H2O = di-trans,octa-cis-undecaprenyl phosphate + phosphate + H(+). Its function is as follows. Catalyzes the dephosphorylation of undecaprenyl diphosphate (UPP). Confers resistance to bacitracin. The protein is Undecaprenyl-diphosphatase 2 of Burkholderia ambifaria (strain ATCC BAA-244 / DSM 16087 / CCUG 44356 / LMG 19182 / AMMD) (Burkholderia cepacia (strain AMMD)).